The primary structure comprises 312 residues: 4-hydroxy-3-methylbut-2-enyl diphosphate reductase (312 aa).

Cys-15 contacts [4Fe-4S] cluster. Positions 44 and 77 each coordinate (2E)-4-hydroxy-3-methylbut-2-enyl diphosphate. 2 residues coordinate dimethylallyl diphosphate: His-44 and His-77. Residues His-44 and His-77 each contribute to the isopentenyl diphosphate site. Cys-99 provides a ligand contact to [4Fe-4S] cluster. Residue His-127 coordinates (2E)-4-hydroxy-3-methylbut-2-enyl diphosphate. His-127 is a dimethylallyl diphosphate binding site. His-127 lines the isopentenyl diphosphate pocket. Catalysis depends on Glu-129, which acts as the Proton donor. Residue Thr-167 coordinates (2E)-4-hydroxy-3-methylbut-2-enyl diphosphate. Cys-197 contributes to the [4Fe-4S] cluster binding site. 4 residues coordinate (2E)-4-hydroxy-3-methylbut-2-enyl diphosphate: Ser-225, Ser-226, Asn-227, and Ser-269. Ser-225, Ser-226, Asn-227, and Ser-269 together coordinate dimethylallyl diphosphate. Isopentenyl diphosphate is bound by residues Ser-225, Ser-226, Asn-227, and Ser-269.

The protein belongs to the IspH family. [4Fe-4S] cluster is required as a cofactor.

It carries out the reaction isopentenyl diphosphate + 2 oxidized [2Fe-2S]-[ferredoxin] + H2O = (2E)-4-hydroxy-3-methylbut-2-enyl diphosphate + 2 reduced [2Fe-2S]-[ferredoxin] + 2 H(+). It catalyses the reaction dimethylallyl diphosphate + 2 oxidized [2Fe-2S]-[ferredoxin] + H2O = (2E)-4-hydroxy-3-methylbut-2-enyl diphosphate + 2 reduced [2Fe-2S]-[ferredoxin] + 2 H(+). It functions in the pathway isoprenoid biosynthesis; dimethylallyl diphosphate biosynthesis; dimethylallyl diphosphate from (2E)-4-hydroxy-3-methylbutenyl diphosphate: step 1/1. Its pathway is isoprenoid biosynthesis; isopentenyl diphosphate biosynthesis via DXP pathway; isopentenyl diphosphate from 1-deoxy-D-xylulose 5-phosphate: step 6/6. Its function is as follows. Catalyzes the conversion of 1-hydroxy-2-methyl-2-(E)-butenyl 4-diphosphate (HMBPP) into a mixture of isopentenyl diphosphate (IPP) and dimethylallyl diphosphate (DMAPP). Acts in the terminal step of the DOXP/MEP pathway for isoprenoid precursor biosynthesis. In Azoarcus sp. (strain BH72), this protein is 4-hydroxy-3-methylbut-2-enyl diphosphate reductase.